Consider the following 124-residue polypeptide: Max-like protein 1 (124 aa).

Acidic residues predominate over residues 1-10 (MSDMSDLEDD). Residues 1-44 (MSDMSDLEDDQTGHCGSGEHSGPFDPKRHAREQHNALERRRRDN) are disordered. The segment at 29–42 (HAREQHNALERRRR) is basic motif. The bHLH domain maps to 29-82 (HAREQHNALERRRRDNIKDMYTSLREVVPDANGERVQASRAVILKKAIESIEKG). Residues 32 to 44 (EQHNALERRRRDN) show a composition bias toward basic and acidic residues. A helix-loop-helix motif region spans residues 43 to 82 (DNIKDMYTSLREVVPDANGERVQASRAVILKKAIESIEKG). Residues 86 to 113 (SATLSVDVAEQESKNAKLREEIARLKAK) adopt a coiled-coil conformation.

The protein belongs to the MAX family. As to quaternary structure, heterodimer with mdl-1 in presence and absence of DNA. Interacts with tdpt-1; the interaction promotes axon regeneration after injury. As to expression, expressed in D-type motor neurons.

Its subcellular location is the nucleus. Transcriptional regulator which binds to the E box motif 5'-CACGTG-3', when in a heterodimeric complex with mdl-1. Involved in the control of lifespan in response to dietary restriction, the decline in protein homeostasis associated with normal aging and may overlap with the insulin-like signaling pathway. Involved in promoting infection by the microsporidian pathogen N.parisii. Required for the expression of svh-2 and the promotion of axon regeneration after injury. The sequence is that of Max-like protein 1 from Caenorhabditis elegans.